The primary structure comprises 132 residues: Large ribosomal subunit protein uL14 (132 aa).

The protein belongs to the universal ribosomal protein uL14 family. Part of the 50S ribosomal subunit. Forms a cluster with proteins L3 and L24e, part of which may contact the 16S rRNA in 2 intersubunit bridges.

In terms of biological role, binds to 23S rRNA. Forms part of two intersubunit bridges in the 70S ribosome. The protein is Large ribosomal subunit protein uL14 of Methanocorpusculum labreanum (strain ATCC 43576 / DSM 4855 / Z).